The sequence spans 223 residues: Endo-1,4-beta-xylanase 2 (223 aa).

An N-terminal signal peptide occupies residues 1–19; the sequence is MVSFTSLLAGVAAISGVLA. The propeptide occupies 20–33; the sequence is APAAEVESVAVEKR. Q34 is subject to Pyrrolidone carboxylic acid. The GH11 domain occupies 34 to 222; it reads QTIQPGTGYN…FSSGSASITV (189 aa). 2 N-linked (GlcNAc...) asparagine glycosylation sites follow: N71 and N94. Substrate contacts are provided by Y106 and Y110. E119 acts as the Nucleophile in catalysis. Positions 121, 155, 159, 169, and 204 each coordinate substrate. The Proton donor role is filled by E210.

It belongs to the glycosyl hydrolase 11 (cellulase G) family.

The protein resides in the secreted. The catalysed reaction is Endohydrolysis of (1-&gt;4)-beta-D-xylosidic linkages in xylans.. It participates in glycan degradation; xylan degradation. In terms of biological role, glycoside hydrolase involved in the hydrolysis of xylan, a major plant cell wall hemicellulose made up of 1,4-beta-linked D-xylopyranose residues. Catalyzes the endohydrolysis of the main-chain 1,4-beta-glycosidic bonds connecting the xylose subunits yielding various xylooligosaccharides and xylose. The catalysis proceeds by a double-displacement reaction mechanism with a putative covalent glycosyl-enzyme intermediate, with retention of the anomeric configuration. Produces xylobiose and xylose as the main degradation products. This chain is Endo-1,4-beta-xylanase 2, found in Hypocrea jecorina (strain ATCC 56765 / BCRC 32924 / NRRL 11460 / Rut C-30) (Trichoderma reesei).